Reading from the N-terminus, the 527-residue chain is Amine oxidase [flavin-containing] A (527 aa).

Position 1 is an N-acetylmethionine (methionine 1). Residues 1–497 (MENQEKASIA…HTFWERNLPS (497 aa)) are Cytoplasmic-facing. The residue at position 383 (serine 383) is a Phosphoserine. Cysteine 406 carries the S-8alpha-FAD cysteine modification. A helical; Anchor for type IV membrane protein transmembrane segment spans residues 498 to 518 (VSGLLKIIGFSTSVTALGFVL). The Mitochondrial intermembrane segment spans residues 519-527 (YKYKLLPRS). An interaction with membrane phospholipid headgroups region spans residues 520-522 (KYK).

Belongs to the flavin monoamine oxidase family. In terms of assembly, monomer, homo- or heterodimer (containing two subunits of similar size). Each subunit contains a covalently bound flavin. Enzymatically active as monomer. Requires FAD as cofactor.

The protein localises to the mitochondrion outer membrane. The catalysed reaction is a secondary aliphatic amine + O2 + H2O = a primary amine + an aldehyde + H2O2. It catalyses the reaction a primary methyl amine + O2 + H2O = an aldehyde + H2O2 + NH4(+). It carries out the reaction (R)-adrenaline + O2 + H2O = (R)-3,4-dihydroxymandelaldehyde + methylamine + H2O2. The enzyme catalyses dopamine + O2 + H2O = 3,4-dihydroxyphenylacetaldehyde + H2O2 + NH4(+). The catalysed reaction is tyramine + O2 + H2O = (4-hydroxyphenyl)acetaldehyde + H2O2 + NH4(+). It catalyses the reaction (R)-noradrenaline + O2 + H2O = (R)-3,4-dihydroxymandelaldehyde + H2O2 + NH4(+). It carries out the reaction serotonin + O2 + H2O = (5-hydroxyindol-3-yl)acetaldehyde + H2O2 + NH4(+). The enzyme catalyses kynuramine + O2 + H2O = 3-(2-aminophenyl)-3-oxopropanal + H2O2 + NH4(+). The catalysed reaction is tryptamine + O2 + H2O = indole-3-acetaldehyde + H2O2 + NH4(+). It catalyses the reaction 2-phenylethylamine + O2 + H2O = 2-phenylacetaldehyde + H2O2 + NH4(+). Functionally, catalyzes the oxidative deamination of primary and some secondary amine such as neurotransmitters, with concomitant reduction of oxygen to hydrogen peroxide and has important functions in the metabolism of neuroactive and vasoactive amines in the central nervous system and peripheral tissues. Preferentially oxidizes serotonin. Also catalyzes the oxidative deamination of kynuramine to 3-(2-aminophenyl)-3-oxopropanal that can spontaneously condense to 4-hydroxyquinoline. This is Amine oxidase [flavin-containing] A from Pongo abelii (Sumatran orangutan).